A 303-amino-acid polypeptide reads, in one-letter code: L(+)-tartrate dehydratase subunit alpha (303 aa).

Positions 71, 190, and 277 each coordinate iron-sulfur cluster.

Belongs to the class-I fumarase family. Tetramer of two alpha and two beta subunits. The cofactor is iron-sulfur cluster.

It carries out the reaction (2R,3R)-tartrate = oxaloacetate + H2O. The polypeptide is L(+)-tartrate dehydratase subunit alpha (ttdA) (Escherichia coli O157:H7).